A 391-amino-acid polypeptide reads, in one-letter code: Formate-dependent phosphoribosylglycinamide formyltransferase (391 aa).

N(1)-(5-phospho-beta-D-ribosyl)glycinamide is bound by residues 18–19 and E78; that span reads EL. Residues R110, K151, 156-161, 191-194, and E199 contribute to the ATP site; these read SSGKGQ and EEFI. An ATP-grasp domain is found at 115 to 305; it reads ELAHEELGIR…EFELHLRAIL (191 aa). Positions 264 and 276 each coordinate Mg(2+). N(1)-(5-phospho-beta-D-ribosyl)glycinamide contacts are provided by residues D283, K353, and 360–361; that span reads RR.

Belongs to the PurK/PurT family. Homodimer.

It catalyses the reaction N(1)-(5-phospho-beta-D-ribosyl)glycinamide + formate + ATP = N(2)-formyl-N(1)-(5-phospho-beta-D-ribosyl)glycinamide + ADP + phosphate + H(+). Its pathway is purine metabolism; IMP biosynthesis via de novo pathway; N(2)-formyl-N(1)-(5-phospho-D-ribosyl)glycinamide from N(1)-(5-phospho-D-ribosyl)glycinamide (formate route): step 1/1. Functionally, involved in the de novo purine biosynthesis. Catalyzes the transfer of formate to 5-phospho-ribosyl-glycinamide (GAR), producing 5-phospho-ribosyl-N-formylglycinamide (FGAR). Formate is provided by PurU via hydrolysis of 10-formyl-tetrahydrofolate. This Trichormus variabilis (strain ATCC 29413 / PCC 7937) (Anabaena variabilis) protein is Formate-dependent phosphoribosylglycinamide formyltransferase.